Reading from the N-terminus, the 301-residue chain is Radial spoke head 1 homolog (301 aa).

A compositionally biased stretch (acidic residues) spans 1–20; the sequence is MSDLGSEELEEEGENDLGEY. The segment at 1–41 is disordered; the sequence is MSDLGSEELEEEGENDLGEYEGERNEVGERHGHGKARLPNG. MORN repeat units follow at residues 20–43, 44–66, 67–89, 90–112, 113–135, and 159–181; these read YEGE…NGDT, YEGS…NGAR, YTGD…DGSR, YEGE…NNDT, YTGE…ETGS, and YQGK…IGCE. Over residues 21–31 the composition is skewed to basic and acidic residues; it reads EGERNEVGERH. The segment at 225–301 is disordered; the sequence is LSEEQPPPEG…FDEEPSDLQD (77 aa). The span at 249 to 261 shows a compositional bias: acidic residues; it reads PSEDIQAEGFEGE. Positions 262–278 are enriched in basic and acidic residues; the sequence is LEPRGADEDVDTFRQES. Residues 279–290 are compositionally biased toward polar residues; that stretch reads QENSYDIDQGNL. Residues 292–301 are compositionally biased toward acidic residues; it reads FDEEPSDLQD.

Component of the axonemal radial spoke 1 (RS1) and 2 (RS2) complexes, at least composed of spoke head proteins RSPH1, RSPH3, RSPH9 and the cilia-specific component RSPH4A or sperm-specific component RSPH6A, spoke stalk proteins RSPH14, DNAJB13, DYDC1, ROPN1L and NME5, and the RS1 complex-specific anchor protein IQUB. Interacts with RSPH3B. Interacts with RSPH4A. Interacts with RSPH6A. As to expression, expressed in the trachea, ependymal cells, oviduct and ependymal cells (at protein level). Germ cell specific. Specifically expressed in testis, and to a lower extent in ovary. Not expressed in somatic tissues.

The protein localises to the cytoplasm. Its subcellular location is the chromosome. It is found in the cytoskeleton. It localises to the cilium axoneme. The protein resides in the flagellum axoneme. Its function is as follows. Functions as part of axonemal radial spoke complexes that play an important part in the motility of sperm and cilia. The chain is Radial spoke head 1 homolog (Rsph1) from Mus musculus (Mouse).